The chain runs to 354 residues: Threonine synthase (354 aa).

Lys-61 bears the N6-(pyridoxal phosphate)lysine mark. Pyridoxal 5'-phosphate contacts are provided by residues Asn-87, 187-191 (GNAGN), and Thr-316.

The protein belongs to the threonine synthase family. Requires pyridoxal 5'-phosphate as cofactor.

It catalyses the reaction O-phospho-L-homoserine + H2O = L-threonine + phosphate. Its pathway is amino-acid biosynthesis; L-threonine biosynthesis; L-threonine from L-aspartate: step 5/5. Functionally, catalyzes the gamma-elimination of phosphate from L-phosphohomoserine and the beta-addition of water to produce L-threonine. This is Threonine synthase (thrC) from Halalkalibacterium halodurans (strain ATCC BAA-125 / DSM 18197 / FERM 7344 / JCM 9153 / C-125) (Bacillus halodurans).